The chain runs to 84 residues: Sulfur carrier protein TusA (84 aa).

Residue C19 is the Cysteine persulfide intermediate of the active site.

This sequence belongs to the sulfur carrier protein TusA family. As to quaternary structure, interacts with IscS.

The protein resides in the cytoplasm. It functions in the pathway tRNA modification. In terms of biological role, sulfur carrier protein involved in sulfur trafficking in the cell. Part of a sulfur-relay system required for 2-thiolation during synthesis of 2-thiouridine of the modified wobble base 5-methylaminomethyl-2-thiouridine (mnm(5)s(2)U) in tRNA. Interacts with IscS and stimulates its cysteine desulfurase activity. Accepts an activated sulfur from IscS, which is then transferred to TusD, and thus determines the direction of sulfur flow from IscS to 2-thiouridine formation. Also appears to be involved in sulfur transfer for the biosynthesis of molybdopterin. The sequence is that of Sulfur carrier protein TusA from Yersinia pseudotuberculosis serotype O:1b (strain IP 31758).